The following is a 200-amino-acid chain: MNDNNNEIDQLIYLFSKLPGLGSRSARRIVLYLLQDKDVRLKTLINNLTEIDKKIVKCQVCGNMDTENICGICTSEYRDKSVIAIVETVAELWAMERSGNFKGLYHVLGHNLSAASRQNPSILRLPELLDRCFKENIKEVIIATNSTLEGQTTAYFITEYLKDHPAKISRLASGIPIGGELDYLDEGTLSAAINLRQPFE.

The C4-type zinc-finger motif lies at 58-73 (CQVCGNMDTENICGIC). In terms of domain architecture, Toprim spans 81 to 176 (SVIAIVETVA…KISRLASGIP (96 aa)).

It belongs to the RecR family.

Functionally, may play a role in DNA repair. It seems to be involved in an RecBC-independent recombinational process of DNA repair. It may act with RecF and RecO. The sequence is that of Recombination protein RecR from Rickettsia bellii (strain OSU 85-389).